The sequence spans 209 residues: MGPNPMKMYPIEGNKSVQFIKPILEKLENVEVGEYSYYDSKNGETFDKQILYHYPILNDKLKIGKFCSIGPGVTIIMNGANHRMDGSTYPFNLFGNGWEKHMPKLDQLPIKGDTIIGNDVWIGKDVVIMPGVKIGDGAIVAANSVVVKDIAPYMLAGGNPANEIKQRFDQDTINQLLDIKWWNWPIDIINENIDKILDNSIIREVIWKK.

Histidine 82 is a catalytic residue.

It belongs to the transferase hexapeptide repeat family. In terms of assembly, homohexamer.

In terms of biological role, inactivates the A compounds of streptogramin antibiotics by acetylation, thus providing resistance to these antibiotics. This is Streptogramin A acetyltransferase (vatD) from Enterococcus faecium (Streptococcus faecium).